The chain runs to 80 residues: Inner kinetochore subunit MHF2 (80 aa).

It belongs to the CENP-X/MHF2 family. As to quaternary structure, the MHF histone-fold complex is a heterotetramer of 2 MHF1-MHF2 heterodimers. Together with MPH1/FANCM, forms the FANCM-MHF complex. Component of the inner kinetochore constitutive centromere-associated network (CCAN) (also known as central kinetochore CTF19 complex in yeast), which is composed of at least AME1, CHL4, CNN1, CTF3, CTF19, IML3, MCM16, MCM21, MCM22, MHF1, MHF2, MIF2, NKP1, NKP2, OKP1 and WIP1.

Its function is as follows. DNA-binding component of a FANCM-MHF complex involved in DNA damage repair and genome maintenance. FANCM-MHF promotes gene conversion at blocked replication forks, probably by reversal of the stalled fork. Component of the kinetochore, a multiprotein complex that assembles on centromeric DNA and attaches chromosomes to spindle microtubules, mediating chromosome segregation and sister chromatid segregation during meiosis and mitosis. Component of the inner kinetochore constitutive centromere-associated network (CCAN), which serves as a structural platform for outer kinetochore assembly. The sequence is that of Inner kinetochore subunit MHF2 from Saccharomyces cerevisiae (strain ATCC 204508 / S288c) (Baker's yeast).